A 366-amino-acid chain; its full sequence is UDP-N-acetylglucosamine--N-acetylmuramyl-(pentapeptide) pyrophosphoryl-undecaprenol N-acetylglucosamine transferase (366 aa).

Residues 10–12 (TGG), asparagine 124, arginine 166, serine 196, and glutamine 296 each bind UDP-N-acetyl-alpha-D-glucosamine.

It belongs to the glycosyltransferase 28 family. MurG subfamily.

It is found in the cell membrane. It carries out the reaction di-trans,octa-cis-undecaprenyl diphospho-N-acetyl-alpha-D-muramoyl-L-alanyl-D-glutamyl-meso-2,6-diaminopimeloyl-D-alanyl-D-alanine + UDP-N-acetyl-alpha-D-glucosamine = di-trans,octa-cis-undecaprenyl diphospho-[N-acetyl-alpha-D-glucosaminyl-(1-&gt;4)]-N-acetyl-alpha-D-muramoyl-L-alanyl-D-glutamyl-meso-2,6-diaminopimeloyl-D-alanyl-D-alanine + UDP + H(+). It functions in the pathway cell wall biogenesis; peptidoglycan biosynthesis. Its function is as follows. Cell wall formation. Catalyzes the transfer of a GlcNAc subunit on undecaprenyl-pyrophosphoryl-MurNAc-pentapeptide (lipid intermediate I) to form undecaprenyl-pyrophosphoryl-MurNAc-(pentapeptide)GlcNAc (lipid intermediate II). The protein is UDP-N-acetylglucosamine--N-acetylmuramyl-(pentapeptide) pyrophosphoryl-undecaprenol N-acetylglucosamine transferase of Alkaliphilus oremlandii (strain OhILAs) (Clostridium oremlandii (strain OhILAs)).